The primary structure comprises 126 residues: Large ribosomal subunit protein bL12 (126 aa).

This sequence belongs to the bacterial ribosomal protein bL12 family. In terms of assembly, homodimer. Part of the ribosomal stalk of the 50S ribosomal subunit. Forms a multimeric L10(L12)X complex, where L10 forms an elongated spine to which 2 to 4 L12 dimers bind in a sequential fashion. Binds GTP-bound translation factors.

Functionally, forms part of the ribosomal stalk which helps the ribosome interact with GTP-bound translation factors. Is thus essential for accurate translation. The protein is Large ribosomal subunit protein bL12 of Desulforudis audaxviator (strain MP104C).